The following is a 241-amino-acid chain: Phosphoribosylaminoimidazole-succinocarboxamide synthase (241 aa).

Belongs to the SAICAR synthetase family.

The catalysed reaction is 5-amino-1-(5-phospho-D-ribosyl)imidazole-4-carboxylate + L-aspartate + ATP = (2S)-2-[5-amino-1-(5-phospho-beta-D-ribosyl)imidazole-4-carboxamido]succinate + ADP + phosphate + 2 H(+). Its pathway is purine metabolism; IMP biosynthesis via de novo pathway; 5-amino-1-(5-phospho-D-ribosyl)imidazole-4-carboxamide from 5-amino-1-(5-phospho-D-ribosyl)imidazole-4-carboxylate: step 1/2. The polypeptide is Phosphoribosylaminoimidazole-succinocarboxamide synthase (Latilactobacillus sakei subsp. sakei (strain 23K) (Lactobacillus sakei subsp. sakei)).